The following is a 293-amino-acid chain: Bifunctional protein FolD (293 aa).

Residues 165-167 (GRS), threonine 194, and valine 235 contribute to the NADP(+) site.

It belongs to the tetrahydrofolate dehydrogenase/cyclohydrolase family. Homodimer.

The catalysed reaction is (6R)-5,10-methylene-5,6,7,8-tetrahydrofolate + NADP(+) = (6R)-5,10-methenyltetrahydrofolate + NADPH. It catalyses the reaction (6R)-5,10-methenyltetrahydrofolate + H2O = (6R)-10-formyltetrahydrofolate + H(+). It functions in the pathway one-carbon metabolism; tetrahydrofolate interconversion. Its function is as follows. Catalyzes the oxidation of 5,10-methylenetetrahydrofolate to 5,10-methenyltetrahydrofolate and then the hydrolysis of 5,10-methenyltetrahydrofolate to 10-formyltetrahydrofolate. This chain is Bifunctional protein FolD, found in Syntrophus aciditrophicus (strain SB).